Here is a 67-residue protein sequence, read N- to C-terminus: MKQTDIPIWERYTLTIEEASKYFRIGENKLRRLAEENKNANWLIMNGNRIQIKRKQFEKIIDTLDAI.

The protein is Excisionase from transposon Tn916 (xis) of Streptococcus agalactiae serotype V (strain ATCC BAA-611 / 2603 V/R).